Consider the following 59-residue polypeptide: UPF0434 protein HEAR2489 (59 aa).

Belongs to the UPF0434 family.

The protein is UPF0434 protein HEAR2489 of Herminiimonas arsenicoxydans.